The chain runs to 143 residues: Nucleoside diphosphate kinase (143 aa).

ATP is bound by residues Lys-11, Phe-59, Arg-87, Thr-93, Arg-104, and Asn-114. The active-site Pros-phosphohistidine intermediate is the His-117.

The protein belongs to the NDK family. In terms of assembly, homotetramer. Mg(2+) serves as cofactor.

It is found in the cytoplasm. The catalysed reaction is a 2'-deoxyribonucleoside 5'-diphosphate + ATP = a 2'-deoxyribonucleoside 5'-triphosphate + ADP. It carries out the reaction a ribonucleoside 5'-diphosphate + ATP = a ribonucleoside 5'-triphosphate + ADP. Its function is as follows. Major role in the synthesis of nucleoside triphosphates other than ATP. The ATP gamma phosphate is transferred to the NDP beta phosphate via a ping-pong mechanism, using a phosphorylated active-site intermediate. This is Nucleoside diphosphate kinase from Idiomarina loihiensis (strain ATCC BAA-735 / DSM 15497 / L2-TR).